The primary structure comprises 299 residues: Lipoyl synthase 2 (299 aa).

The [4Fe-4S] cluster site is built by cysteine 43, cysteine 48, cysteine 54, cysteine 69, cysteine 73, cysteine 76, and serine 294. The region spanning 55–283 (YAAGTATFLL…GAVARDLGFA (229 aa)) is the Radical SAM core domain.

This sequence belongs to the radical SAM superfamily. Lipoyl synthase family. The cofactor is [4Fe-4S] cluster.

It localises to the cytoplasm. It catalyses the reaction [[Fe-S] cluster scaffold protein carrying a second [4Fe-4S](2+) cluster] + N(6)-octanoyl-L-lysyl-[protein] + 2 oxidized [2Fe-2S]-[ferredoxin] + 2 S-adenosyl-L-methionine + 4 H(+) = [[Fe-S] cluster scaffold protein] + N(6)-[(R)-dihydrolipoyl]-L-lysyl-[protein] + 4 Fe(3+) + 2 hydrogen sulfide + 2 5'-deoxyadenosine + 2 L-methionine + 2 reduced [2Fe-2S]-[ferredoxin]. It participates in protein modification; protein lipoylation via endogenous pathway; protein N(6)-(lipoyl)lysine from octanoyl-[acyl-carrier-protein]: step 2/2. Catalyzes the radical-mediated insertion of two sulfur atoms into the C-6 and C-8 positions of the octanoyl moiety bound to the lipoyl domains of lipoate-dependent enzymes, thereby converting the octanoylated domains into lipoylated derivatives. This is Lipoyl synthase 2 from Parasynechococcus marenigrum (strain WH8102).